The following is a 77-amino-acid chain: Small ribosomal subunit protein uS17 (77 aa).

This sequence belongs to the universal ribosomal protein uS17 family. As to quaternary structure, part of the 30S ribosomal subunit.

Its function is as follows. One of the primary rRNA binding proteins, it binds specifically to the 5'-end of 16S ribosomal RNA. This is Small ribosomal subunit protein uS17 from Anaplasma marginale (strain St. Maries).